Reading from the N-terminus, the 246-residue chain is MTVYAIIGGTGLTQLEGLNIRQSLPMNTPYGAPSGEIQIGDYAGREVMFLARHGHPHRLPPHQVNYRANIWALKQAGAEAILAVNAVGGIHPAMGTGHFCVPHDLVDYTSGRQHTFFADDLEEVTHIDFSYPYSEALRVRLVAALAAEGCAFSDRGVYACTQGPRLETVAEIIRLERDGCDIVGMTGMPEAALARELELEYACLALVVNPAAGKSTAVITMAEIEQALRDGMGKVKATLARVLSAS.

Residues Thr10 and 52–53 (RH) each bind phosphate. Met185 provides a ligand contact to substrate. Thr186 is a phosphate binding site. 209 to 211 (NPA) provides a ligand contact to substrate.

It belongs to the PNP/MTAP phosphorylase family. MTAP subfamily. As to quaternary structure, homotrimer.

It catalyses the reaction S-methyl-5'-thioinosine + phosphate = 5-(methylsulfanyl)-alpha-D-ribose 1-phosphate + hypoxanthine. It functions in the pathway purine metabolism; purine nucleoside salvage. Catalyzes the reversible phosphorylation of S-methyl-5'-thioinosine (MTI) to hypoxanthine and 5-methylthioribose-1-phosphate. Involved in the breakdown of S-methyl-5'-thioadenosine (MTA), a major by-product of polyamine biosynthesis. Catabolism of (MTA) occurs via deamination to MTI and phosphorolysis to hypoxanthine. In Pseudomonas syringae pv. tomato (strain ATCC BAA-871 / DC3000), this protein is Probable S-methyl-5'-thioinosine phosphorylase.